The chain runs to 335 residues: 2-acylglycerol O-acyltransferase 2-B (335 aa).

Transmembrane regions (helical) follow at residues W24–F44 and Y104–T124. An N-linked (GlcNAc...) asparagine glycan is attached at N206.

This sequence belongs to the diacylglycerol acyltransferase family.

It is found in the endoplasmic reticulum membrane. Its subcellular location is the cytoplasm. The protein resides in the perinuclear region. The catalysed reaction is a 2-acylglycerol + an acyl-CoA = a 1,2-diacylglycerol + CoA. It catalyses the reaction a 2-acylglycerol + an acyl-CoA = a 1,2-diacyl-sn-glycerol + CoA. The enzyme catalyses a 2-acylglycerol + an acyl-CoA = a 2,3-diacyl-sn-glycerol + CoA. It carries out the reaction a 1-acylglycerol + an acyl-CoA = a 1,2-diacylglycerol + CoA. The catalysed reaction is a 1-acylglycerol + an acyl-CoA = a 1,3-diacylglycerol + CoA. It catalyses the reaction 1-O-alkylglycerol + an acyl-CoA = 1-O-alkyl-3-acylglycerol + CoA. The enzyme catalyses an acyl-CoA + a 1,2-diacyl-sn-glycerol = a triacyl-sn-glycerol + CoA. The protein operates within glycerolipid metabolism; triacylglycerol biosynthesis. In terms of biological role, catalyzes the formation of diacylglycerol from 2-monoacylglycerol and fatty acyl-CoA. Functionally, involved in glycerolipid synthesis and lipid metabolism. Catalyzes the formation of diacylglycerol, the precursor of triacylglycerol, by transferring the acyl chain of a fatty acyl-CoA to a monoacylglycerol. Plays a central role in absorption of dietary fat in the small intestine by catalyzing the resynthesis of triacylglycerol in enterocytes. Has a preference toward monoacylglycerols containing unsaturated fatty acids in an order of C18:3 &gt; C18:2 &gt; C18:1 &gt; C18:0 at sn-2. Able to use 1-monoalkylglycerol (1-MAkG, 1-O-alkylglycerol) as an acyl acceptor for the synthesis of monoalkyl-monoacylglycerol (MAMAG, 1-O-alkyl-3-acylglycerol or 1-O-alkyl-2-acylglycerol) and subsequently, with lower efficiency, may add another acyl chain producing monoalkyl-diacylglycerol (MADAG, 1-O-alkyl-2,3-diacylglycerol). Possesses weak but significant activity with diacylglycerol as substrate, producing triacylglycerol (triacyl-sn-glycerol). The polypeptide is 2-acylglycerol O-acyltransferase 2-B (mogat2-b) (Xenopus laevis (African clawed frog)).